The sequence spans 501 residues: Glycerol kinase (501 aa).

Thr17 is an ADP binding site. ATP-binding residues include Thr17, Thr18, and Ser19. Position 17 (Thr17) interacts with sn-glycerol 3-phosphate. Arg21 is a binding site for ADP. Positions 87, 88, 139, and 243 each coordinate sn-glycerol 3-phosphate. Arg87, Glu88, Tyr139, Asp243, and Gln244 together coordinate glycerol. 2 residues coordinate ADP: Thr265 and Gly308. The ATP site is built by Thr265, Gly308, Gln312, and Gly409. The ADP site is built by Gly409 and Asn413.

Belongs to the FGGY kinase family.

It catalyses the reaction glycerol + ATP = sn-glycerol 3-phosphate + ADP + H(+). Its pathway is polyol metabolism; glycerol degradation via glycerol kinase pathway; sn-glycerol 3-phosphate from glycerol: step 1/1. Inhibited by fructose 1,6-bisphosphate (FBP). Key enzyme in the regulation of glycerol uptake and metabolism. Catalyzes the phosphorylation of glycerol to yield sn-glycerol 3-phosphate. This Pseudomonas fluorescens (strain ATCC BAA-477 / NRRL B-23932 / Pf-5) protein is Glycerol kinase.